A 390-amino-acid chain; its full sequence is MGERKGVNKWYPPDFDPAKHGSINGYYKTHPLRERARKLSQGILIIRFEMPYNIWCDGCKNHIGMGVRYNAEKKKVGNYYTTPIYRFRMKCHLCVNYIEMQTDPATCDYVIVSGAQRKEERWDMAENEQILTTERNEKEKLETDAMYKLDHGGKDKEKLRAAIPSLNELQEHQSGWKDDFQLNSALRRKFRTEKKVIAEEEEKDNAVRLRTGLSIPLVPEREEDKKLASLLTFQSPDSYEDKKQWKRQEISSRSWFNSPSSAAGGAAGSLLQKLGQQGRGAAVAKALSSSTSTLPILVRRKSESSKSETNNTMSTILPVDTHPAAKDTDATDLPSIVNNINVSINTDINSCTTDACKASSSSEEENSIDSCATGKSLVADYSDSDSGSEV.

The disordered stretch occupies residues 354 to 390 (DACKASSSSEEENSIDSCATGKSLVADYSDSDSGSEV).

The protein belongs to the CWC16 family.

The protein localises to the nucleus. Functionally, may be involved in mRNA splicing. This is Probable splicing factor YJU2B (yju2b) from Danio rerio (Zebrafish).